Consider the following 314-residue polypeptide: Hydroxyacyl-coenzyme A dehydrogenase, mitochondrial (314 aa).

Residues 1–12 (MAFVTRQFLRSM) constitute a mitochondrion transit peptide. NAD(+)-binding positions include 34 to 39 (GGGLMG) and Asp-57. Ser-73 provides a ligand contact to CoA. The residue at position 75 (Lys-75) is an N6-acetyllysine. CoA is bound at residue Lys-80. Lys-80 bears the N6-succinyllysine mark. Lys-81 and Lys-87 each carry N6-acetyllysine; alternate. N6-succinyllysine; alternate occurs at positions 81 and 87. Glu-122 is a binding site for NAD(+). Lys-125 carries the post-translational modification N6-acetyllysine. Lys-127 is an NAD(+) binding site. Lys-127 is modified (N6-(2-hydroxyisobutyryl)lysine). Lys-136 is subject to N6-acetyllysine; alternate. Lys-136 is modified (N6-succinyllysine; alternate). Positions 149 and 173 each coordinate NAD(+). Ser-149 lines the CoA pocket. Lys-179 carries the N6-acetyllysine modification. N6-acetyllysine; alternate is present on residues Lys-185, Lys-192, and Lys-202. N6-succinyllysine; alternate is present on residues Lys-185, Lys-192, and Lys-202. Lys-206 is subject to N6-succinyllysine. An N6-acetyllysine; alternate mark is found at Lys-212 and Lys-241. 2 positions are modified to N6-succinyllysine; alternate: Lys-212 and Lys-241. Lys-305 is an NAD(+) binding site. Residue Lys-312 is modified to N6-acetyllysine; alternate. At Lys-312 the chain carries N6-succinyllysine; alternate.

Belongs to the 3-hydroxyacyl-CoA dehydrogenase family. In terms of assembly, homodimer. Interacts with GLUD1; this interaction inhibits the activation of glutamate dehydrogenase 1 (GLUD1). Post-translationally, succinylation at Lys-81, adjacent to a coenzyme A binding site. Desuccinylated by SIRT5. Expressed in liver, kidney, brain, and pancreatic islets.

Its subcellular location is the mitochondrion matrix. It localises to the nucleus. The protein localises to the cytoplasm. The protein resides in the cytosol. The enzyme catalyses a (3S)-3-hydroxyacyl-CoA + NAD(+) = a 3-oxoacyl-CoA + NADH + H(+). The catalysed reaction is (3S)-3-hydroxybutanoyl-CoA + NAD(+) = acetoacetyl-CoA + NADH + H(+). It catalyses the reaction (3S)-hydroxydecanoyl-CoA + NAD(+) = 3-oxodecanoyl-CoA + NADH + H(+). It carries out the reaction (3S)-hydroxyhexadecanoyl-CoA + NAD(+) = 3-oxohexadecanoyl-CoA + NADH + H(+). It functions in the pathway lipid metabolism; fatty acid beta-oxidation. Its function is as follows. Mitochondrial fatty acid beta-oxidation enzyme that catalyzes the third step of the beta-oxidation cycle for medium and short-chain 3-hydroxy fatty acyl-CoAs (C4 to C10). Plays a role in the control of insulin secretion by inhibiting the activation of glutamate dehydrogenase 1 (GLUD1), an enzyme that has an important role in regulating amino acid-induced insulin secretion. Plays a role in the maintenance of normal spermatogenesis through the reduction of fatty acid accumulation in the testes. In terms of biological role, inhibits cell proliferation. This is Hydroxyacyl-coenzyme A dehydrogenase, mitochondrial (Hadh) from Mus musculus (Mouse).